Here is a 523-residue protein sequence, read N- to C-terminus: Cytoplasmic dynein 1 light intermediate chain 1 (523 aa).

The segment at 1–25 (MAAVGRVGSFGSSPPGLASTYASGP) is disordered. 74 to 81 (GEDGAGKT) serves as a coordination point for ATP. 3 disordered regions span residues 200-219 (PGEDFPASPQRRTTGAQEDR), 387-434 (PPTA…DPNM), and 457-523 (GSPG…GEAS). Residue Ser207 is modified to Phosphoserine. The residue at position 213 (Thr213) is a Phosphothreonine. Phosphoserine occurs at positions 398 and 405. The residue at position 408 (Thr408) is a Phosphothreonine. Residues Ser412, Ser419, Ser421, and Ser427 each carry the phosphoserine modification. The span at 412–421 (SVSSNVASVS) shows a compositional bias: low complexity. Over residues 458–473 (SPGGPGVGGSPGGGAA) the composition is skewed to gly residues. Positions 474 to 485 (GASPSLPPSAKK) are enriched in low complexity. 2 positions are modified to phosphoserine: Ser486 and Ser510. Over residues 506-523 (PASVSPTTPTSPTEGEAS) the composition is skewed to low complexity. Thr512, Thr513, and Thr515 each carry phosphothreonine. Position 516 is a phosphoserine (Ser516).

It belongs to the dynein light intermediate chain family. In terms of assembly, homodimer. The cytoplasmic dynein 1 complex consists of two catalytic heavy chains (HCs) and a number of non-catalytic subunits presented by intermediate chains (ICs), light intermediate chains (LICs) and light chains (LCs); the composition seems to vary in respect to the IC, LIC and LC composition. The heavy chain homodimer serves as a scaffold for the probable homodimeric assembly of the respective non-catalytic subunits. The ICs and LICs bind directly to the HC dimer and the LCs assemble on the IC dimer. Self-associates. Interacts with DYNC1H1; DYNC1LI1 and DYNC1LI2 bind mutually exclusive to DYNC1H1. Interacts with PCNT. Forms a complex with RAB11FIP3 and RAB11A1; the interaction between DYNC1LI1 and RAB11FIP3 is direct and induces DYNC1LI1 localization onto endosomal membrane; the complex regulates endocytic trafficking. Interacts with RUFY3. In terms of processing, phosphorylated during mitosis but not in interphase.

It is found in the cytoplasm. Its subcellular location is the chromosome. It localises to the centromere. The protein resides in the kinetochore. The protein localises to the cytoskeleton. It is found in the spindle pole. Its subcellular location is the recycling endosome membrane. In terms of biological role, acts as one of several non-catalytic accessory components of the cytoplasmic dynein 1 complex that are thought to be involved in linking dynein to cargos and to adapter proteins that regulate dynein function. Cytoplasmic dynein 1 acts as a motor for the intracellular retrograde motility of vesicles and organelles along microtubules. May play a role in binding dynein to membranous organelles or chromosomes. Probably involved in the microtubule-dependent transport of pericentrin. Is required for progress through the spindle assembly checkpoint. The phosphorylated form appears to be involved in the selective removal of MAD1L1 and MAD1L2 but not BUB1B from kinetochores. Forms a functional Rab11/RAB11FIP3/dynein complex onto endosomal membrane that regulates the movement of peripheral sorting endosomes (SE) along microtubule tracks toward the microtubule organizing center/centrosome, generating the endosomal recycling compartment (ERC). The chain is Cytoplasmic dynein 1 light intermediate chain 1 (Dync1li1) from Mus musculus (Mouse).